Here is a 465-residue protein sequence, read N- to C-terminus: Serine/threonine-protein kinase 38 (465 aa).

Ala-2 is modified (N-acetylalanine). The tract at residues 62–87 is interaction with S100B; that stretch reads KRLRRSAHARKETEFLRLKRTRLGLE. Thr-74 bears the Phosphothreonine mark. A Protein kinase domain is found at 89–382; it reads FESLKVIGRG…VEEIKNNSFF (294 aa). ATP-binding positions include 95–103 and Lys-118; that span reads IGRGAFGEV. Asp-212 acts as the Proton acceptor in catalysis. A Phosphoserine modification is found at Ser-264. A Phosphoserine; by autocatalysis modification is found at Ser-281. A UFM1-interacting motif (UFIM) motif is present at residues 306–311; it reads WSLGVI. Residues 383 to 455 enclose the AGC-kinase C-terminal domain; sequence EGVDWEHIRE…KRFEGLTARG (73 aa). At Thr-444 the chain carries Phosphothreonine; by STK24/MST3.

It belongs to the protein kinase superfamily. AGC Ser/Thr protein kinase family. In terms of assembly, homodimeric S100B binds two molecules of STK38. Interacts with MOB1 and MOB2. Interacts with MAP3K1 and MAP3K2 (via the kinase domain). Forms a tripartite complex with MOBKL1B and STK3/MST2. Interacts with MICAL1; leading to inhibit the protein kinase activity by antagonizing activation by MST1/STK4. It depends on Mg(2+) as a cofactor. Post-translationally, ISGylated. Phosphorylated by STK3/MST2 and this is enhanced by MOBKL1B.

The protein localises to the nucleus. The protein resides in the cytoplasm. It localises to the chromosome. It carries out the reaction L-seryl-[protein] + ATP = O-phospho-L-seryl-[protein] + ADP + H(+). The enzyme catalyses L-threonyl-[protein] + ATP = O-phospho-L-threonyl-[protein] + ADP + H(+). Activated by binding of S100B which releases autoinhibitory N-lobe interactions, enabling ATP to bind and the autophosphorylation of Ser-281. Thr-444 then undergoes calcium-dependent phosphorylation by STK24/MST3. Interactions between phosphorylated Thr-444 and the N-lobe promote additional structural changes that complete the activation of the kinase. Autoinhibition is also released by the binding of MOB1/MOBKL1A and MOB2/HCCA2 to the N-terminal of STK38. In terms of biological role, serine/threonine-protein kinase that acts as a negative regulator of MAP3K1/2 signaling. Converts MAP3K2 from its phosphorylated form to its non-phosphorylated form and inhibits autophosphorylation of MAP3K2. Acts as an ufmylation 'reader' in a kinase-independent manner: specifically recognizes and binds mono-ufmylated histone H4 in response to DNA damage, promoting the recruitment of SUV39H1 to the double-strand breaks, resulting in ATM activation. The protein is Serine/threonine-protein kinase 38 (STK38) of Bos taurus (Bovine).